The primary structure comprises 108 residues: Cell division topological specificity factor (108 aa).

It belongs to the MinE family.

Prevents the cell division inhibition by proteins MinC and MinD at internal division sites while permitting inhibition at polar sites. This ensures cell division at the proper site by restricting the formation of a division septum at the midpoint of the long axis of the cell. The protein is Cell division topological specificity factor of Prochlorococcus marinus (strain AS9601).